Consider the following 575-residue polypeptide: Alpha-(1,6)-fucosyltransferase (575 aa).

The Cytoplasmic portion of the chain corresponds to 1–9; sequence MRPWTGSWR. The helical; Signal-anchor for type II membrane protein transmembrane segment at 10–30 threads the bilayer; the sequence is WIMLILFAWGTLLFYIGGHLV. At 31-575 the chain is on the lumenal side; that stretch reads RDNDHPDHSS…KYPTYPEAEK (545 aa). Disulfide bonds link C204/C266, C212/C230, and C218/C222. In terms of domain architecture, GT23 spans 206 to 493; sequence KAKKLVCNIN…PDASANFHSL (288 aa). S278 is subject to Phosphoserine. The SH3-binding signature appears at 299–305; it reads PRPPYLP. The important for donor substrate binding stretch occupies residues 365-366; that stretch reads RR. A disulfide bridge links C465 with C472. Residues 502–563 form the SH3 domain; the sequence is QNAHNQIAIY…PSYKVREKIE (62 aa).

This sequence belongs to the glycosyltransferase 23 family. Post-translationally, tyrosine phosphorylated by PKDCC/VLK.

Its subcellular location is the golgi apparatus. It localises to the golgi stack membrane. It carries out the reaction N(4)-{beta-D-GlcNAc-(1-&gt;2)-alpha-D-Man-(1-&gt;3)-[beta-D-GlcNAc-(1-&gt;2)-alpha-D-Man-(1-&gt;6)]-beta-D-Man-(1-&gt;4)-beta-D-GlcNAc-(1-&gt;4)-beta-D-GlcNAc}-L-asparaginyl-[protein] + GDP-beta-L-fucose = an N(4)-{beta-D-GlcNAc-(1-&gt;2)-alpha-D-Man-(1-&gt;3)-[beta-D-GlcNAc-(1-&gt;2)-alpha-D-Man-(1-&gt;6)]-beta-D-Man-(1-&gt;4)-beta-D-GlcNAc-(1-&gt;4)-[alpha-L-Fuc-(1-&gt;6)]-beta-D-GlcNAc}-L-asparaginyl-[protein] + GDP + H(+). It participates in protein modification; protein glycosylation. Catalyzes the addition of fucose in alpha 1-6 linkage to the first GlcNAc residue, next to the peptide chains in N-glycans. The chain is Alpha-(1,6)-fucosyltransferase (FUT8) from Homo sapiens (Human).